The primary structure comprises 880 residues: Alanine--tRNA ligase (880 aa).

The Zn(2+) site is built by H567, H571, C669, and H673.

This sequence belongs to the class-II aminoacyl-tRNA synthetase family. The cofactor is Zn(2+).

The protein localises to the cytoplasm. It carries out the reaction tRNA(Ala) + L-alanine + ATP = L-alanyl-tRNA(Ala) + AMP + diphosphate. Its function is as follows. Catalyzes the attachment of alanine to tRNA(Ala) in a two-step reaction: alanine is first activated by ATP to form Ala-AMP and then transferred to the acceptor end of tRNA(Ala). Also edits incorrectly charged Ser-tRNA(Ala) and Gly-tRNA(Ala) via its editing domain. The chain is Alanine--tRNA ligase from Bacillus anthracis.